The chain runs to 167 residues: Small heat shock protein C1 (167 aa).

One can recognise a sHSP domain in the interval 59-167; the sequence is PFYESNSIKS…EQDAKEIPIN (109 aa).

It belongs to the small heat shock protein (HSP20) family.

This Rickettsia bellii (strain RML369-C) protein is Small heat shock protein C1 (hspC1).